The following is a 636-amino-acid chain: 1-deoxy-D-xylulose-5-phosphate synthase (636 aa).

Residues His-73 and 114 to 116 each bind thiamine diphosphate; that span reads SHA. Asp-146 is a binding site for Mg(2+). Residues 147 to 148, Asn-176, Tyr-287, and Glu-368 contribute to the thiamine diphosphate site; that span reads GA. Asn-176 provides a ligand contact to Mg(2+).

The protein belongs to the transketolase family. DXPS subfamily. In terms of assembly, homodimer. Mg(2+) is required as a cofactor. It depends on thiamine diphosphate as a cofactor.

It carries out the reaction D-glyceraldehyde 3-phosphate + pyruvate + H(+) = 1-deoxy-D-xylulose 5-phosphate + CO2. It functions in the pathway metabolic intermediate biosynthesis; 1-deoxy-D-xylulose 5-phosphate biosynthesis; 1-deoxy-D-xylulose 5-phosphate from D-glyceraldehyde 3-phosphate and pyruvate: step 1/1. In terms of biological role, catalyzes the acyloin condensation reaction between C atoms 2 and 3 of pyruvate and glyceraldehyde 3-phosphate to yield 1-deoxy-D-xylulose-5-phosphate (DXP). The polypeptide is 1-deoxy-D-xylulose-5-phosphate synthase (Corynebacterium glutamicum (strain ATCC 13032 / DSM 20300 / JCM 1318 / BCRC 11384 / CCUG 27702 / LMG 3730 / NBRC 12168 / NCIMB 10025 / NRRL B-2784 / 534)).